A 416-amino-acid polypeptide reads, in one-letter code: MTSTLPSQPKDMELANSSRPSVHGRFGRFGGQYVPETLMPALAELEKKAAEAWQDSSFTNELSHLLKTYVGRATPLYEAKRLSQHYMSREGGPRIWLKREDLNHTGAHKINNALGQALLAIRMGKKRIIAETGAGQHGVATATVCARFGLECVIYMGQEDMERQALNVFRMKLLGAKVQSVTAGTATLKDATSEAIRDWVTNVESTHYILGSVAGPHPYPMLVRDFHSVIGEETKQQCKEAFGRSPDVLLACVGGGSNAMGLFHSFIEDLSVKMIGVEAAGDGVNTKRHAATITQGSVGVLHGAMSLLLQDSDGQVQEAHSISAGLDYPGVGPEHSYLNEIGRAEYVAVTDKEALNALELVSKLEGIIPALETAHAFAWLDTLCPSLAPGTEIVINCSGRGDKDVNTVAKKMGFEI.

Residues 1–23 form a disordered region; it reads MTSTLPSQPKDMELANSSRPSVH. Lysine 109 carries the post-translational modification N6-(pyridoxal phosphate)lysine.

This sequence belongs to the TrpB family. Tetramer of two alpha and two beta chains. Pyridoxal 5'-phosphate is required as a cofactor.

It catalyses the reaction (1S,2R)-1-C-(indol-3-yl)glycerol 3-phosphate + L-serine = D-glyceraldehyde 3-phosphate + L-tryptophan + H2O. It functions in the pathway amino-acid biosynthesis; L-tryptophan biosynthesis; L-tryptophan from chorismate: step 5/5. Its function is as follows. The beta subunit is responsible for the synthesis of L-tryptophan from indole and L-serine. This chain is Tryptophan synthase beta chain, found in Prochlorococcus marinus (strain MIT 9211).